The following is a 324-amino-acid chain: Lipoyl synthase (324 aa).

Positions 71, 76, 82, 97, 101, 104, and 311 each coordinate [4Fe-4S] cluster. The 218-residue stretch at 83 to 300 folds into the Radical SAM core domain; that stretch reads FGHGTATFLI…GDKAREMGFT (218 aa).

Belongs to the radical SAM superfamily. Lipoyl synthase family. [4Fe-4S] cluster is required as a cofactor.

It localises to the cytoplasm. It carries out the reaction [[Fe-S] cluster scaffold protein carrying a second [4Fe-4S](2+) cluster] + N(6)-octanoyl-L-lysyl-[protein] + 2 oxidized [2Fe-2S]-[ferredoxin] + 2 S-adenosyl-L-methionine + 4 H(+) = [[Fe-S] cluster scaffold protein] + N(6)-[(R)-dihydrolipoyl]-L-lysyl-[protein] + 4 Fe(3+) + 2 hydrogen sulfide + 2 5'-deoxyadenosine + 2 L-methionine + 2 reduced [2Fe-2S]-[ferredoxin]. Its pathway is protein modification; protein lipoylation via endogenous pathway; protein N(6)-(lipoyl)lysine from octanoyl-[acyl-carrier-protein]: step 2/2. Catalyzes the radical-mediated insertion of two sulfur atoms into the C-6 and C-8 positions of the octanoyl moiety bound to the lipoyl domains of lipoate-dependent enzymes, thereby converting the octanoylated domains into lipoylated derivatives. In Nitrosococcus oceani (strain ATCC 19707 / BCRC 17464 / JCM 30415 / NCIMB 11848 / C-107), this protein is Lipoyl synthase.